The sequence spans 341 residues: Type II restriction enzyme BgcI specificity subunit S.BcgI (341 aa).

It belongs to the type-I restriction system S methylase family. In terms of assembly, heterotrimer of two A and one B subunit. Both subunits are necessary for DNA-binding, which is sequence non-specific. The cofactor is Mg(2+).

It catalyses the reaction Endonucleolytic cleavage of DNA to give specific double-stranded fragments with terminal 5'-phosphates.. With respect to regulation, DNA restriction requires S-adenosyl-L-methionine and Mg(2+), and is inhibited by S-adenosyl-homocysteine. SAM may be a cofactor for DNA restriction. In terms of biological role, the specificity subunit. A B, G, H and S subtype restriction enzyme that recognizes the double-stranded sequence 5'-CGAN(6)TGC-3' and cleaves bilaterally and symmetrically 10 base pairs upstream and 12 base pairs downstream of the sequence to release a 34-base pair fragment. Methylation of the recognition sequence occurs on the adenine in either one or both strands; seems to methylate restricted DNA. This subunit degrades DNA in a non-specific manner. In Heyndrickxia coagulans (Weizmannia coagulans), this protein is Type II restriction enzyme BgcI specificity subunit S.BcgI.